Consider the following 422-residue polypeptide: Probable ornithine aminotransferase, mitochondrial (422 aa).

Lysine 273 is modified (N6-(pyridoxal phosphate)lysine).

The protein belongs to the class-III pyridoxal-phosphate-dependent aminotransferase family. The cofactor is pyridoxal 5'-phosphate.

It localises to the mitochondrion matrix. The catalysed reaction is a 2-oxocarboxylate + L-ornithine = L-glutamate 5-semialdehyde + an L-alpha-amino acid. It functions in the pathway amino-acid biosynthesis; L-proline biosynthesis; L-glutamate 5-semialdehyde from L-ornithine: step 1/1. This chain is Probable ornithine aminotransferase, mitochondrial, found in Caenorhabditis elegans.